Here is a 350-residue protein sequence, read N- to C-terminus: Protein RecA (350 aa).

65–72 (GPESSGKT) provides a ligand contact to ATP.

This sequence belongs to the RecA family.

The protein localises to the cytoplasm. In terms of biological role, can catalyze the hydrolysis of ATP in the presence of single-stranded DNA, the ATP-dependent uptake of single-stranded DNA by duplex DNA, and the ATP-dependent hybridization of homologous single-stranded DNAs. It interacts with LexA causing its activation and leading to its autocatalytic cleavage. In Clostridium tetani (strain Massachusetts / E88), this protein is Protein RecA.